Here is a 132-residue protein sequence, read N- to C-terminus: RuBisCO chaperone RbcX (132 aa).

The interval His-110–His-132 is disordered. Residues Leu-111 to His-132 show a composition bias toward polar residues.

Belongs to the RbcX family. As to quaternary structure, homodimer. Interacts with the exposed C-terminal peptide of RbcL via its central cleft, contacts a second RbcL monomer via its peripheral polar surface. RbcX and Raf1 can bind simultaneously to RbcL.

It localises to the carboxysome. It is found in the cytoplasm. Its function is as follows. An RbcL-specific chaperone. The central cleft of the RbcX homodimer (RbcX2) binds the C-terminus of an RbcL monomer, stabilizing the C-terminus and probably preventing its reassociation with chaperonin GroEL-ES. At the same time the peripheral region of RbcX2 binds a second RbcL monomer, bridging the RbcL homodimers in the correct orientation. The RbcX2(2)-bound RbcL dimers then assemble into the RbcL8 core (RbcL8-(RbcX2)8). RbcS binding triggers the release of RbcX2. Functionally, when rbcL-rbcX-rbcS or rbcL-rbcS were overexpressed in E.coli no change in reconstituted RuBisCO activity was observed, which suggests RbcX plays no role in RuBisCO assembly in this system. However in PubMed:8472962 E.coli chaperones groL and groS were also overexpressed, which may compensate for lack of rbcX. The sequence is that of RuBisCO chaperone RbcX from Nostoc sp. (strain PCC 7120 / SAG 25.82 / UTEX 2576).